A 302-amino-acid polypeptide reads, in one-letter code: Probable alpha-L-glutamate ligase (302 aa).

The region spanning 104 to 287 is the ATP-grasp domain; the sequence is LQLLSRKGVG…VAGLLIKFIE (184 aa). Residues Lys-141, 178-179, Asp-187, and 211-213 each bind ATP; these read EY and RSN. Residues Asp-248, Glu-260, and Asn-262 each contribute to the Mg(2+) site. 3 residues coordinate Mn(2+): Asp-248, Glu-260, and Asn-262.

Belongs to the RimK family. It depends on Mg(2+) as a cofactor. Requires Mn(2+) as cofactor.

This is Probable alpha-L-glutamate ligase from Alcanivorax borkumensis (strain ATCC 700651 / DSM 11573 / NCIMB 13689 / SK2).